The chain runs to 252 residues: Uridylate kinase (252 aa).

Residue lysine 20 to glycine 23 coordinates ATP. Residues glycine 28–glycine 33 are involved in allosteric activation by GTP. A UMP-binding site is contributed by glycine 62. ATP-binding residues include glycine 63 and arginine 67. UMP-binding positions include aspartate 82 and methionine 143–threonine 150. The ATP site is built by asparagine 171, tyrosine 177, and aspartate 180.

Belongs to the UMP kinase family. As to quaternary structure, homohexamer.

It localises to the cytoplasm. It carries out the reaction UMP + ATP = UDP + ADP. It participates in pyrimidine metabolism; CTP biosynthesis via de novo pathway; UDP from UMP (UMPK route): step 1/1. With respect to regulation, allosterically activated by GTP. Inhibited by UTP. Catalyzes the reversible phosphorylation of UMP to UDP. The chain is Uridylate kinase from Streptomyces avermitilis (strain ATCC 31267 / DSM 46492 / JCM 5070 / NBRC 14893 / NCIMB 12804 / NRRL 8165 / MA-4680).